Here is a 481-residue protein sequence, read N- to C-terminus: Cerebral cavernous malformations 2 protein-like (481 aa).

Disordered regions lie at residues 161–193 (PVPA…GTAE) and 214–290 (EARA…DPQN). Residues 184-193 (PEKRRVGTAE) show a composition bias toward basic and acidic residues. The span at 214–223 (EARAAGGGGS) shows a compositional bias: gly residues. The span at 237 to 251 (WERRQTFSGSWERRH) shows a compositional bias: basic and acidic residues.

It belongs to the CCM2 family.

The polypeptide is Cerebral cavernous malformations 2 protein-like (Ccm2l) (Mus musculus (Mouse)).